Here is a 126-residue protein sequence, read N- to C-terminus: MLKRTYIRTLTEDLALSLQSLGFVLELRRTQVGIFKAENAIKIKSSDEITKNFIEKKSIKIEAILDDILVLDATDDQAQRIKYGQKCVFDYEEDVSFLWVRYNGTLLAIGSLNKSCFNSLRVFNLL.

This is an uncharacterized protein from Rickettsia prowazekii (strain Madrid E).